A 679-amino-acid chain; its full sequence is Mitotic interactor and substrate of PLK1 (679 aa).

S78 bears the Phosphoserine; by CDK1; in vitro mark. Disordered stretches follow at residues A151 to E182 and A206 to V245. Polar residues predominate over residues R153–G163. S156 carries the post-translational modification Phosphoserine. Residues T164 and T172 each carry the phosphothreonine; by CDK1; in vitro modification. T179 carries the phosphothreonine modification. Position 214 is a phosphoserine; by CDK1; in vitro (S214). T219 carries the post-translational modification Phosphothreonine. T224 is modified (phosphothreonine; by CDK1; in vitro). The residue at position 284 (S284) is a Phosphoserine; by CDK1; in vitro. T287 carries the post-translational modification Phosphothreonine; by CDK1; in vitro. The residue at position 348 (S348) is a Phosphoserine. The segment covering Q360–H371 has biased composition (basic and acidic residues). Positions Q360 to R419 are disordered. A Phosphothreonine; by CDK1; in vitro modification is found at T377. Phosphoserine; by CDK1; in vitro is present on S382. A phosphoserine; by PLK1; in vitro mark is found at S394, S395, and S397. At S400 the chain carries Phosphoserine. Low complexity predominate over residues P401–A411. S430 carries the phosphoserine modification. The tract at residues P447–A494 is disordered. Phosphoserine; by PLK1; in vitro is present on S471. The span at E472 to Q482 shows a compositional bias: polar residues. 2 positions are modified to phosphoserine: S541 and S543. The stretch at D545 to L569 forms a coiled coil. Basic and acidic residues predominate over residues R557–N567. Disordered stretches follow at residues R557–S598 and D622–P643. Phosphoserine; by CDK1; in vitro is present on S575. Phosphothreonine is present on T577. Phosphoserine; by PLK1; in vitro is present on residues S582 and S586. The segment covering D583 to S593 has biased composition (low complexity). S675 bears the Phosphoserine mark.

It belongs to the MISP family. Associates with F-actin. Interacts with DCTN1; this interaction regulates DCTN1 distribution at the cell cortex. Interacts with PTK2/FAK and MAPRE1. Phosphorylated by CDK1 and PLK1. CDK1 is the priming kinase for PLK1 phosphorylation. Phosphorylation by PLK1 is required for proper spindle orientation at metaphase.

The protein localises to the cell junction. It localises to the focal adhesion. The protein resides in the cytoplasm. It is found in the cytoskeleton. Its subcellular location is the cell cortex. Its function is as follows. Plays a role in mitotic spindle orientation and mitotic progression. Regulates the distribution of dynactin at the cell cortex in a PLK1-dependent manner, thus stabilizing cortical and astral microtubule attachments required for proper mitotic spindle positioning. May link microtubules to the actin cytospkeleton and focal adhesions. May be required for directed cell migration and centrosome orientation. May also be necessary for proper stacking of the Golgi apparatus. The chain is Mitotic interactor and substrate of PLK1 from Homo sapiens (Human).